The chain runs to 800 residues: Aldehyde dehydrogenase family 16 member A1 (800 aa).

Belongs to the aldehyde dehydrogenase family. Interacts with SPG21.

The sequence is that of Aldehyde dehydrogenase family 16 member A1 (ALDH16A1) from Bos taurus (Bovine).